Reading from the N-terminus, the 186-residue chain is Peptidoglycan-recognition protein SD (186 aa).

The signal sequence occupies residues 1–18 (MTWIGLLIVGLTAIAVQG). In terms of domain architecture, N-acetylmuramoyl-L-alanine amidase spans 47–169 (AVIAHTAGGA…RQVSATKSPG (123 aa)). C57 and C63 form a disulfide bridge. An N-linked (GlcNAc...) asparagine glycan is attached at N181.

Belongs to the N-acetylmuramoyl-L-alanine amidase 2 family. In larvae, it is mainly expressed in fat body. Also expressed in uninduced hemocytes and mbn-2 cells.

Its subcellular location is the secreted. Peptidoglycan-recognition protein that plays a key role in innate immunity by binding to peptidoglycans (PGN) of Gram-positive bacteria and activating the Toll pathway. Has no activity against on Gram-negative bacteria and fungi. Shows some partial redundancy with PRPGP-SA in Gram-positive bacteria recognition. May act by activating the proteolytic cleavage of Spatzle and the subsequent activation of Toll pathway. Recognizes S.aureus PGN. The protein is Peptidoglycan-recognition protein SD (PGRP-SD) of Drosophila melanogaster (Fruit fly).